The chain runs to 89 residues: Cell division topological specificity factor (89 aa).

The protein belongs to the MinE family.

In terms of biological role, prevents the cell division inhibition by proteins MinC and MinD at internal division sites while permitting inhibition at polar sites. This ensures cell division at the proper site by restricting the formation of a division septum at the midpoint of the long axis of the cell. The chain is Cell division topological specificity factor from Sodalis glossinidius (strain morsitans).